A 361-amino-acid polypeptide reads, in one-letter code: Ribosomal RNA large subunit methyltransferase M (361 aa).

S-adenosyl-L-methionine-binding positions include serine 187, 220–223 (CPGG), aspartate 239, aspartate 259, and aspartate 276. Lysine 305 acts as the Proton acceptor in catalysis.

The protein belongs to the class I-like SAM-binding methyltransferase superfamily. RNA methyltransferase RlmE family. RlmM subfamily. Monomer.

The protein resides in the cytoplasm. The catalysed reaction is cytidine(2498) in 23S rRNA + S-adenosyl-L-methionine = 2'-O-methylcytidine(2498) in 23S rRNA + S-adenosyl-L-homocysteine + H(+). In terms of biological role, catalyzes the 2'-O-methylation at nucleotide C2498 in 23S rRNA. This Shewanella baltica (strain OS223) protein is Ribosomal RNA large subunit methyltransferase M.